Here is a 199-residue protein sequence, read N- to C-terminus: WASH complex subunit 3 (199 aa).

Residues 47–76 (VCEEKLSALSLRIQQIETTLNILEAKLSSI) adopt a coiled-coil conformation. Positions 93 to 120 (NISNGHLPSQPDAQSVVVSPQSDNNSMN) are enriched in polar residues. Disordered regions lie at residues 93–136 (NISN…NITT) and 170–199 (PDLL…SFSD). Positions 183–192 (GEPEAEESSD) are enriched in acidic residues.

This sequence belongs to the CCDC53 family. Component of the WASH complex.

In Xenopus laevis (African clawed frog), this protein is WASH complex subunit 3.